The following is a 736-amino-acid chain: Zinc finger CCCH domain-containing protein 14 (736 aa).

Met1 bears the N-acetylmethionine mark. 2 stretches are compositionally biased toward polar residues: residues 77-103 and 131-145; these read TTEPSSLKSSDTNIFDSNVPSNKSNFS and VSTSSQESKTTNVRQ. Residues 77 to 145 are disordered; sequence TTEPSSLKSS…QESKTTNVRQ (69 aa). At Ser85 the chain carries Phosphoserine. Residues Lys99, Lys139, Lys175, and Lys198 each participate in a glycyl lysine isopeptide (Lys-Gly) (interchain with G-Cter in SUMO2) cross-link. A Phosphoserine modification is found at Ser240. Lys245 is covalently cross-linked (Glycyl lysine isopeptide (Lys-Gly) (interchain with G-Cter in SUMO2)). Phosphoserine is present on Ser281. Residues Lys283 and Lys295 each participate in a glycyl lysine isopeptide (Lys-Gly) (interchain with G-Cter in SUMO2) cross-link. Residues 310 to 350 form a disordered region; that stretch reads HDGEEEEEDDDYGSRTGSISSSVSVPAKPERRPSLPPSKQA. Residues Ser327 and Ser343 each carry the phosphoserine modification. Lys357 is modified (N6-acetyllysine; alternate). Lys357 is covalently cross-linked (Glycyl lysine isopeptide (Lys-Gly) (interchain with G-Cter in SUMO2); alternate). A Glycyl lysine isopeptide (Lys-Gly) (interchain with G-Cter in SUMO2) cross-link involves residue Lys378. Phosphoserine is present on residues Ser390 and Ser409. The disordered stretch occupies residues 398 to 430; it reads VVQGQSRTPRISPPIKEEETKGDSVEKNQGTQQ. The segment covering 412–423 has biased composition (basic and acidic residues); that stretch reads IKEEETKGDSVE. Lys413 participates in a covalent cross-link: Glycyl lysine isopeptide (Lys-Gly) (interchain with G-Cter in SUMO2). The residue at position 421 (Ser421) is a Phosphoserine. Lys489 participates in a covalent cross-link: Glycyl lysine isopeptide (Lys-Gly) (interchain with G-Cter in SUMO2). Residues Ser498, Ser515, Ser527, and Ser620 each carry the phosphoserine modification. 5 consecutive C3H1-type zinc fingers follow at residues 595-620, 621-640, 641-656, 682-699, and 701-719; these read EKLLERCKYWPACKNGDECAYHHPIS, PCKAFPNCKFAEKCLFVHPN, CKYDAKCTKPDCPFTH, CRYFPACKKMECPFYHPK, and CRFNTQCTRPDCTFYHPTI.

This sequence belongs to the ZC3H14 family. In terms of assembly, homodimer; facilitating circular RNAs (circRNAs) formation. Associates with the spliceosome. Interacts with HOOK2. Interacts with ZFC3H1 in a RNase-sensitive manner. In terms of tissue distribution, expressed in fetal and adult brain. Expressed in fetal and adult temporal lobe.

It localises to the nucleus speckle. It is found in the cytoplasm. In terms of biological role, RNA-binding protein involved in the biogenesis of circular RNAs (circRNAs), which are produced by back-splicing circularization of pre-mRNAs. Acts by binding to both exon-intron boundary and 3'-UTR of pre-mRNAs to promote circRNA biogenesis through dimerization and the association with the spliceosome. Required for spermatogenesis via involvement in circRNA biogenesis. Regulates the pre-mRNA processing of ATP5MC1; preventing its degradation. Also binds the poly(A) tail of mRNAs; controlling poly(A) length in neuronal cells. In Homo sapiens (Human), this protein is Zinc finger CCCH domain-containing protein 14.